A 409-amino-acid chain; its full sequence is Odorant receptor 35a (409 aa).

Residues 1 to 35 (MVRYVPRFADGQKVKLAWPLAVFRLNHIFWPLDPS) lie on the Cytoplasmic side of the membrane. A helical membrane pass occupies residues 36-56 (TGKWGRYLDKVLAVAMSLVFM). The Extracellular segment spans residues 57 to 64 (QHNDAELR). Residues 65 to 85 (YLRFEASNRNLDAFLTGMPTY) form a helical membrane-spanning segment. Over 86–139 (LILVEAQFRSLHILLHFEKLQKFLEIFYANIYIDPRKEPEMFRKVDGKMIINRL) the chain is Cytoplasmic. A helical membrane pass occupies residues 140-160 (VSAMYGAVISLYLIAPVFSII). Residue Asn161 is glycosylated (N-linked (GlcNAc...) asparagine). Over 161–177 (NQSKDFLYSMIFPFDSD) the chain is Extracellular. The helical transmembrane segment at 178-198 (PLYIFVPLLLTNVWVGIVIDT) threads the bilayer. Topologically, residues 199–273 (MMFGETNLLC…QQLEAQYTVR (75 aa)) are cytoplasmic. A helical transmembrane segment spans residues 274 to 294 (VFIMFAFAAGLLCALSFKAYT). The Extracellular segment spans residues 295–302 (NPMANYIY). The chain crosses the membrane as a helical span at residues 303 to 323 (AIWFGAKTVELLSLGQIGSDL). The Cytoplasmic segment spans residues 324–379 (AFTTDSLSTMYYLTHWEQILQYSTNPSENLRLLKLINLAIEMNSKPFYVTGLKYFR). A helical transmembrane segment spans residues 380–400 (VSLQAGLKILQASFSYFTFLT). Residues 401–409 (SMQRRQMSN) lie on the Extracellular side of the membrane.

This sequence belongs to the insect chemoreceptor superfamily. Heteromeric odorant receptor channel (TC 1.A.69) family. Or1a subfamily. In terms of assembly, interacts with Orco. Complexes exist early in the endomembrane system in olfactory sensory neurons (OSNs), coupling these complexes to the conserved ciliary trafficking pathway. Expressed in ac3B olfactory sensory neurons in the antenna.

The protein localises to the cell membrane. In terms of biological role, odorant receptor which mediates acceptance or avoidance behavior, depending on its substrates. The odorant receptor repertoire encodes a large collection of odor stimuli that vary widely in identity, intensity, and duration. Forms a complex with Orco to form odorant-sensing units, providing sensitive and prolonged odorant signaling and calcium permeability. Involved in the behavioral responses to esters. Involved in the behavioral responses to butanol, pentanol, hexanol, octanol, propyl acetate, and butyl acetate. The polypeptide is Odorant receptor 35a (Or35a) (Drosophila melanogaster (Fruit fly)).